A 126-amino-acid chain; its full sequence is Fluoride-specific ion channel FluC 2 (126 aa).

Transmembrane regions (helical) follow at residues 5–25 (TALT…GSVL), 44–64 (GTLT…GLAL), 68–88 (AALL…TWML), and 99–119 (MVSA…AALL). Gly-78 and Thr-81 together coordinate Na(+).

Belongs to the fluoride channel Fluc/FEX (TC 1.A.43) family.

Its subcellular location is the cell membrane. It catalyses the reaction fluoride(in) = fluoride(out). With respect to regulation, na(+) is not transported, but it plays an essential structural role and its presence is essential for fluoride channel function. Functionally, fluoride-specific ion channel. Important for reducing fluoride concentration in the cell, thus reducing its toxicity. The chain is Fluoride-specific ion channel FluC 2 from Mycobacterium bovis (strain ATCC BAA-935 / AF2122/97).